Reading from the N-terminus, the 450-residue chain is tRNA modification GTPase MnmE (450 aa).

(6S)-5-formyl-5,6,7,8-tetrahydrofolate-binding residues include arginine 20, glutamate 78, and lysine 117. The region spanning 211–372 (GFRMVIVGKP…LEEAIYRETQ (162 aa)) is the TrmE-type G domain. Asparagine 221 serves as a coordination point for K(+). GTP-binding positions include 221–226 (NVGKST), 240–246 (TDIPGTT), and 265–268 (DTAG). Residue serine 225 coordinates Mg(2+). Positions 240, 242, and 245 each coordinate K(+). Threonine 246 provides a ligand contact to Mg(2+). Lysine 450 is a binding site for (6S)-5-formyl-5,6,7,8-tetrahydrofolate.

This sequence belongs to the TRAFAC class TrmE-Era-EngA-EngB-Septin-like GTPase superfamily. TrmE GTPase family. Homodimer. Heterotetramer of two MnmE and two MnmG subunits. It depends on K(+) as a cofactor.

The protein resides in the cytoplasm. Functionally, exhibits a very high intrinsic GTPase hydrolysis rate. Involved in the addition of a carboxymethylaminomethyl (cmnm) group at the wobble position (U34) of certain tRNAs, forming tRNA-cmnm(5)s(2)U34. This is tRNA modification GTPase MnmE from Thermotoga petrophila (strain ATCC BAA-488 / DSM 13995 / JCM 10881 / RKU-1).